The following is a 58-amino-acid chain: Large ribosomal subunit protein bL32 (58 aa).

It belongs to the bacterial ribosomal protein bL32 family.

This chain is Large ribosomal subunit protein bL32, found in Carboxydothermus hydrogenoformans (strain ATCC BAA-161 / DSM 6008 / Z-2901).